A 412-amino-acid polypeptide reads, in one-letter code: Multifunctional CCA protein (412 aa).

Residues Gly8 and Arg11 each contribute to the ATP site. CTP-binding residues include Gly8 and Arg11. Residues Asp21 and Asp23 each contribute to the Mg(2+) site. Residues Arg91, Arg137, and Arg140 each contribute to the ATP site. CTP is bound by residues Arg91, Arg137, and Arg140. The HD domain occupies 228–329 (TGIHTLMTLS…VKLFDSIDAW (102 aa)).

Belongs to the tRNA nucleotidyltransferase/poly(A) polymerase family. Bacterial CCA-adding enzyme type 1 subfamily. Monomer. Can also form homodimers and oligomers. Mg(2+) is required as a cofactor. The cofactor is Ni(2+).

The catalysed reaction is a tRNA precursor + 2 CTP + ATP = a tRNA with a 3' CCA end + 3 diphosphate. The enzyme catalyses a tRNA with a 3' CCA end + 2 CTP + ATP = a tRNA with a 3' CCACCA end + 3 diphosphate. Its function is as follows. Catalyzes the addition and repair of the essential 3'-terminal CCA sequence in tRNAs without using a nucleic acid template. Adds these three nucleotides in the order of C, C, and A to the tRNA nucleotide-73, using CTP and ATP as substrates and producing inorganic pyrophosphate. tRNA 3'-terminal CCA addition is required both for tRNA processing and repair. Also involved in tRNA surveillance by mediating tandem CCA addition to generate a CCACCA at the 3' terminus of unstable tRNAs. While stable tRNAs receive only 3'-terminal CCA, unstable tRNAs are marked with CCACCA and rapidly degraded. The chain is Multifunctional CCA protein from Escherichia coli O8 (strain IAI1).